The following is a 519-amino-acid chain: Polyamine aminopropyltransferase (519 aa).

7 consecutive transmembrane segments (helical) span residues 17–37 (LLLV…LALV), 53–73 (LIVA…KPFL), 86–106 (LLGL…AVVG), 109–129 (LWML…ELPL), 158–178 (LGAL…LGMM), 180–200 (GAAA…CVLL), and 208–228 (QFIR…TVLV). Residues 200-463 (LRHLLPRAQF…FQLCGPEGTE (264 aa)) form a spermidine synthase region. The region spanning 225 to 459 (TVLVRSDGIV…GDWGFQLCGP (235 aa)) is the PABS domain. S-methyl-5'-thioadenosine is bound at residue glutamine 255. Aspartate 307 lines the spermidine pocket. Residues glutamate 326 and 358–359 (DA) contribute to the S-methyl-5'-thioadenosine site. The active-site Proton acceptor is the aspartate 379.

It belongs to the spermidine/spermine synthase family. In terms of assembly, homodimer or homotetramer.

It is found in the cell membrane. The enzyme catalyses S-adenosyl 3-(methylsulfanyl)propylamine + putrescine = S-methyl-5'-thioadenosine + spermidine + H(+). The protein operates within amine and polyamine biosynthesis; spermidine biosynthesis; spermidine from putrescine: step 1/1. Catalyzes the irreversible transfer of a propylamine group from the amino donor S-adenosylmethioninamine (decarboxy-AdoMet) to putrescine (1,4-diaminobutane) to yield spermidine. This Corynebacterium efficiens (strain DSM 44549 / YS-314 / AJ 12310 / JCM 11189 / NBRC 100395) protein is Polyamine aminopropyltransferase.